A 418-amino-acid polypeptide reads, in one-letter code: Protein fuzzy homolog (418 aa).

Belongs to the fuzzy family. Component of the CPLANE (ciliogenesis and planar polarity effectors) complex, composed of INTU, FUZ and WDPCP. Interacts with CPLANE2. Interacts with CPLANE1.

It localises to the cytoplasm. The protein localises to the cytoskeleton. It is found in the cilium basal body. In terms of biological role, probable planar cell polarity effector involved in cilium biogenesis. May regulate protein and membrane transport to the cilium. Proposed to function as core component of the CPLANE (ciliogenesis and planar polarity effectors) complex involved in the recruitment of peripheral IFT-A proteins to basal bodies. May regulate the morphogenesis of hair follicles which depends on functional primary cilia. Binds phosphatidylinositol 3-phosphate with highest affinity, followed by phosphatidylinositol 4-phosphate and phosphatidylinositol 5-phosphate. The protein is Protein fuzzy homolog (FUZ) of Homo sapiens (Human).